We begin with the raw amino-acid sequence, 71 residues long: Metallothionein-like protein 1 (71 aa).

Belongs to the metallothionein superfamily. Type 15 family.

Its function is as follows. Metallothioneins have a high content of cysteine residues that bind various heavy metals. The chain is Metallothionein-like protein 1 (MT1) from Casuarina glauca (Swamp oak).